Consider the following 229-residue polypeptide: Putative N-acetylmannosamine-6-phosphate 2-epimerase (229 aa).

This sequence belongs to the NanE family.

The enzyme catalyses an N-acyl-D-glucosamine 6-phosphate = an N-acyl-D-mannosamine 6-phosphate. It participates in amino-sugar metabolism; N-acetylneuraminate degradation; D-fructose 6-phosphate from N-acetylneuraminate: step 3/5. Converts N-acetylmannosamine-6-phosphate (ManNAc-6-P) to N-acetylglucosamine-6-phosphate (GlcNAc-6-P). The protein is Putative N-acetylmannosamine-6-phosphate 2-epimerase of Shigella flexneri serotype 5b (strain 8401).